A 797-amino-acid chain; its full sequence is Plakophilin-3 (797 aa).

A disordered region spans residues 56 to 82; sequence QLGQQPRHNGAAEPEPEAETARGTSRG. At Arg81 the chain carries Omega-N-methylarginine. Ser123, Ser180, and Ser183 each carry phosphoserine. Position 195 is a phosphotyrosine; by SRC (Tyr195). 2 positions are modified to phosphoserine: Ser238 and Ser240. Phosphothreonine is present on Thr250. Position 261 is an omega-N-methylarginine (Arg261). The tract at residues 283 to 288 is required for interaction with SFN; that stretch reads SLSLSL. 4 positions are modified to phosphoserine: Ser285, Ser313, Ser314, and Ser331. The tract at residues 294–724 is required for interaction with GSK3B; sequence LPDVHGFNSY…AEVLVNIIAV (431 aa). ARM repeat units follow at residues 305-348, 351-390, 393-432, 449-487, 491-536, 596-637, 645-684, and 689-730; these read SHRT…HKCY, AAAK…NLIY, ADNK…NLSS, TDLV…NLSS, ATRQ…NLSY, PKGL…NITA, VLSR…NLSR, and KDEM…NLVV. Residues 516–797 form a required for binding to PKP2 mRNA region; that stretch reads AGKCEDKSVE…GYRKEDFLGP (282 aa).

It belongs to the beta-catenin family. As to quaternary structure, found in a complex composed of CDH1, RAP1A and PKP3; PKP3 acts as a scaffold protein within the complex, the complex is required for CDH1 localization to mature desmosome cell junctions. Interacts with FXR1; the interaction facilitates the binding of PKP3 to PKP2 mRNA. Interacts (via ARM repeats) with GSK3B; the interaction may be involved in PKP3 protein degradation. Interacts with hyperphosphorylated and hypophosphorylated RB1; the interaction inhibits RB1 interaction with and repression of the transcription factor E2F1, potentially via sequestering RB1 to the cytoplasm. Interacts with CDKN1A; the interaction sequesters CDKN1A to the cytoplasm thereby repressing its role as an inhibitor of CDK4- and CDK6-driven RB1 phosphorylation. Interacts (via N-terminus) with SFN; the interaction maintains the cytoplasmic pool of PKP3, facilitates PKP3 exchange at desmosomes and restricts PKP3 localization to existing desmosome cell junctions. Interacts (via N-terminus) with JUP; the interaction is required for PKP3 localization to desmosome cell-cell junctions. Phosphorylated at Ser-285 when localized to the cytoplasm, PKP3 at desmosome cell junctions is not phosphorylated. Phosphorylation at Try-195 by SRC is induced by reactive oxygen species and potentially acts as a release mechanism from desmosome cell-cell junctions. As to expression, expressed in the epidermis of the skin, in squamous non-cornifying epithelial cells in the vagina, single layer epithelia of the duodenum and pancreas acini and non-epithelial dendritic reticulum cells of lymph node follicles (at protein level). In terms of tissue distribution, expressed in the oral cavity mucosa, epidermis and small intestine epithelium (at protein level). Expressed in the oral cavity mucosa and epithelial cells of the crypts and villi in the small intestine (at protein level). Expressed in the epidermis with more abundant expression found in the basal and low spinous cells (at protein level).

The protein resides in the nucleus. It is found in the cell junction. Its subcellular location is the desmosome. It localises to the cytoplasm. The protein localises to the cell membrane. The protein resides in the adherens junction. Its function is as follows. A component of desmosome cell-cell junctions which are required for positive regulation of cellular adhesion. Required for the localization of DSG2, DSP and PKP2 to mature desmosome junctions. May also play a role in the maintenance of DSG3 protein abundance in keratinocytes. Required for the formation of DSP-containing desmosome precursors in the cytoplasm during desmosome assembly. Also regulates the accumulation of CDH1 to mature desmosome junctions, via cAMP-dependent signaling and its interaction with activated RAP1A. Positively regulates the stabilization of PKP2 mRNA and therefore protein abundance, via its interaction with FXR1, may also regulate the protein abundance of DSP via the same mechanism. May also regulate the protein abundance of the desmosome component PKP1. Required for the organization of desmosome junctions at intercellular borders between basal keratinocytes of the epidermis, as a result plays a role in maintenance of the dermal barrier and regulation of the dermal inflammatory response. Required during epidermal keratinocyte differentiation for cell adherence at tricellular cell-cell contacts, via regulation of the timely formation of adherens junctions and desmosomes in a calcium-dependent manner, and may also play a role in the organization of the intracellular actin fiber belt. Acts as a negative regulator of the inflammatory response in hematopoietic cells of the skin and intestine, via modulation of proinflammatory cytokine production. Important for epithelial barrier maintenance in the intestine to reduce intestinal permeability, thereby plays a role in protection from intestinal-derived endotoxemia. Required for the development of hair follicles, via a role in the regulation of inner root sheaf length, correct alignment and anterior-posterior polarity of hair follicles. Promotes proliferation and cell-cycle G1/S phase transition of keratinocytes. Promotes E2F1-driven transcription of G1/S phase promoting genes by acting to release E2F1 from its inhibitory interaction with RB1, via sequestering RB1 and CDKN1A to the cytoplasm and thereby increasing CDK4- and CDK6-driven phosphorylation of RB1. May act as a scaffold protein to facilitate MAPK phosphorylation of RPS6KA protein family members and subsequently promote downstream EGFR signaling. May play a role in the positive regulation of transcription of Wnt-mediated TCF-responsive target genes. This chain is Plakophilin-3 (PKP3), found in Homo sapiens (Human).